Consider the following 106-residue polypeptide: Large ribosomal subunit protein uL24 (106 aa).

It belongs to the universal ribosomal protein uL24 family. As to quaternary structure, part of the 50S ribosomal subunit.

One of two assembly initiator proteins, it binds directly to the 5'-end of the 23S rRNA, where it nucleates assembly of the 50S subunit. In terms of biological role, one of the proteins that surrounds the polypeptide exit tunnel on the outside of the subunit. In Polaromonas sp. (strain JS666 / ATCC BAA-500), this protein is Large ribosomal subunit protein uL24.